Consider the following 704-residue polypeptide: Polyribonucleotide nucleotidyltransferase (704 aa).

The Mg(2+) site is built by Asp487 and Asp493. The KH domain occupies 554–613 (PRLLTIKIHPDKIREVIGKGGSTIQAITKETGTQIDIQDDGTIIIASVNAIAAQAAKSRI). Residues 623–691 (GRIYEGKVAK…KQGRIRLSIK (69 aa)) form the S1 motif domain.

The protein belongs to the polyribonucleotide nucleotidyltransferase family. As to quaternary structure, component of the RNA degradosome, which is a multiprotein complex involved in RNA processing and mRNA degradation. The cofactor is Mg(2+).

It is found in the cytoplasm. It carries out the reaction RNA(n+1) + phosphate = RNA(n) + a ribonucleoside 5'-diphosphate. Functionally, involved in mRNA degradation. Catalyzes the phosphorolysis of single-stranded polyribonucleotides processively in the 3'- to 5'-direction. The protein is Polyribonucleotide nucleotidyltransferase of Xanthomonas euvesicatoria pv. vesicatoria (strain 85-10) (Xanthomonas campestris pv. vesicatoria).